A 417-amino-acid chain; its full sequence is Phosphoglycerate kinase, cytosolic (417 aa).

(2R)-3-phosphoglycerate contacts are provided by V23, D24, F25, N26, R39, S61, H62, G64, R65, R132, H168, and R169. ADP is bound by residues G214 and A215. Residue G214 participates in CDP binding. Residues A215 and K216 each coordinate AMP. ATP is bound at residue A215. Mg(2+) is bound at residue A215. Residue K216 participates in (2R)-3-phosphoglycerate binding. D219 contributes to the CDP binding site. D219 contacts Mg(2+). K220 and G238 together coordinate ADP. K220 lines the AMP pocket. ATP is bound at residue K220. CDP is bound at residue G238. AMP is bound by residues A239 and A311. A239 and A311 together coordinate ATP. Residues A311 and N335 each coordinate ADP. CDP is bound by residues G336 and F341. F341, E342, D374, and T375 together coordinate ADP. Residue E342 coordinates AMP. ATP contacts are provided by E342, D374, and T375. Position 374 (D374) interacts with Mg(2+).

This sequence belongs to the phosphoglycerate kinase family. As to quaternary structure, monomer. Mg(2+) is required as a cofactor.

Its subcellular location is the cytoplasm. It catalyses the reaction (2R)-3-phosphoglycerate + ATP = (2R)-3-phospho-glyceroyl phosphate + ADP. Its pathway is carbohydrate degradation; glycolysis; pyruvate from D-glyceraldehyde 3-phosphate: step 2/5. The chain is Phosphoglycerate kinase, cytosolic (PGKB) from Leishmania mexicana.